Here is a 259-residue protein sequence, read N- to C-terminus: Pycsar effector protein RsmPycTIR (259 aa).

1–120 (MVGGDEVIAN…RRVHEDFSGR (120 aa)) is an a nucleoside 3',5'-cyclic phosphate binding site. The interval 126–229 (LATGISRRTS…AEFQYQISSS (104 aa)) is TIR-like. Helical transmembrane passes span 136 to 156 (GWNW…AIWY), 169 to 189 (VLLP…ADPV), and 234 to 254 (QATA…LFWI).

Its subcellular location is the cell inner membrane. It carries out the reaction NAD(+) + H2O = ADP-D-ribose + nicotinamide + H(+). Pycsar (pyrimidine cyclase system for antiphage resistance) provides immunity against bacteriophage. The pyrimidine cyclase (PycC) synthesizes cyclic nucleotides in response to infection; these serve as specific second messenger signals. The signals activate the adjacent effector, leading to bacterial cell death and abortive phage infection. A clade B Pycsar system. Its function is as follows. The effector gene of a two-gene Pycsar system. Expression of this and adjacent uridylate cyclase RsmPycC (AC A0A1V0HUX5) probably confers resistance to bacteriophage. The genes are probably only expressed in response to bacteriophage infection. Probably only responds to cUMP (produced by its cognate NTP cyclase), it may act by degrading NAD(+) and/or by impairing membrane integrity. This chain is Pycsar effector protein RsmPycTIR, found in Rhodovulum sp. (strain MB263).